A 293-amino-acid chain; its full sequence is MASVNNYQVDCGSRSARIQPRINNGIHDEESLFEVLELSEEEFELDFHRLKSFNDVRVINNPDLSPECTNTAISRDETLESASSAFEVPSDEIAILSISSDSNKNSPPSEQPAPALRNIRSSSNSDRIDEWCLGSHLFNELHQNVPQSSDGVNHGFPVYSFKERELYTSAKLKKLTNAQRIAVQKLSRDLYPILRTCYREKTRRQLLTYHHERIFDDIPSFFPQRDFIFNYYSMPLEFDRLSDVDIDSSSRSRFTDESTGETLNRSPSAASSSLENTSWFGWTLLSRFLDREW.

Polar residues-rich tracts occupy residues Ile98–Pro108 and Gly260–Ser273. 2 disordered regions span residues Ile98–Ser121 and Ser250–Ser273.

As to quaternary structure, interacts with PEX3, ATG8 and ATG11.

It is found in the peroxisome. Its function is as follows. Required for autophagic breakdown of peroxisomes, called pexophagy, through linking peroxisomes to the autophagy apparatus. Involved in regulation of the glyoxylate cycle. The protein is Autophagy-related protein 36 (ATG36) of Saccharomyces cerevisiae (strain ATCC 204508 / S288c) (Baker's yeast).